A 281-amino-acid polypeptide reads, in one-letter code: Acetyl-coenzyme A carboxylase carboxyl transferase subunit beta (281 aa).

Positions 1-23 (MAWFKREKKGISTSTEEKKEAPD) are disordered. Residues 25-281 (LWNKCPNCKK…LAAFLKMMKN (257 aa)) enclose the CoA carboxyltransferase N-terminal domain. Zn(2+) contacts are provided by C29, C32, C48, and C51. The segment at 29–51 (CPNCKKALHSADLLENKYVCQYC) adopts a C4-type zinc-finger fold.

This sequence belongs to the AccD/PCCB family. Acetyl-CoA carboxylase is a heterohexamer composed of biotin carboxyl carrier protein (AccB), biotin carboxylase (AccC) and two subunits each of ACCase subunit alpha (AccA) and ACCase subunit beta (AccD). It depends on Zn(2+) as a cofactor.

Its subcellular location is the cytoplasm. It carries out the reaction N(6)-carboxybiotinyl-L-lysyl-[protein] + acetyl-CoA = N(6)-biotinyl-L-lysyl-[protein] + malonyl-CoA. It participates in lipid metabolism; malonyl-CoA biosynthesis; malonyl-CoA from acetyl-CoA: step 1/1. In terms of biological role, component of the acetyl coenzyme A carboxylase (ACC) complex. Biotin carboxylase (BC) catalyzes the carboxylation of biotin on its carrier protein (BCCP) and then the CO(2) group is transferred by the transcarboxylase to acetyl-CoA to form malonyl-CoA. This is Acetyl-coenzyme A carboxylase carboxyl transferase subunit beta from Pedobacter heparinus (strain ATCC 13125 / DSM 2366 / CIP 104194 / JCM 7457 / NBRC 12017 / NCIMB 9290 / NRRL B-14731 / HIM 762-3).